The primary structure comprises 589 residues: L-fucose isomerase (589 aa).

Catalysis depends on proton acceptor residues E340 and D364. Mn(2+) is bound by residues E340, D364, and H527.

This sequence belongs to the L-fucose isomerase family. The cofactor is Mn(2+).

The protein localises to the cytoplasm. The catalysed reaction is L-fucose = L-fuculose. Its pathway is carbohydrate degradation; L-fucose degradation; L-lactaldehyde and glycerone phosphate from L-fucose: step 1/3. Functionally, converts the aldose L-fucose into the corresponding ketose L-fuculose. The chain is L-fucose isomerase from Haemophilus influenzae (strain PittEE).